The chain runs to 465 residues: Methionine aminopeptidase 2-2 (465 aa).

Residues 1–13 are compositionally biased toward basic and acidic residues; it reads MGSKTPNDHRRGP. A disordered region spans residues 1–92; that stretch reads MGSKTPNDHR…KKKTLLGGLQ (92 aa). The segment covering 44 to 55 has biased composition (acidic residues); it reads GETEDGEDEDDD. The span at 71–86 shows a compositional bias: basic residues; that stretch reads TKKKNKRKKNKKKKKT. His217 is a binding site for substrate. Residues Asp238, Asp249, and His318 each contribute to the a divalent metal cation site. His326 serves as a coordination point for substrate. A divalent metal cation is bound by residues Glu351 and Glu446.

Belongs to the peptidase M24A family. Methionine aminopeptidase eukaryotic type 2 subfamily. The cofactor is Co(2+). Requires Zn(2+) as cofactor. It depends on Mn(2+) as a cofactor. Fe(2+) is required as a cofactor.

Its subcellular location is the cytoplasm. It carries out the reaction Release of N-terminal amino acids, preferentially methionine, from peptides and arylamides.. Functionally, cotranslationally removes the N-terminal methionine from nascent proteins. The N-terminal methionine is often cleaved when the second residue in the primary sequence is small and uncharged (Met-Ala-, Cys, Gly, Pro, Ser, Thr, or Val). The chain is Methionine aminopeptidase 2-2 from Ajellomyces dermatitidis (strain ER-3 / ATCC MYA-2586) (Blastomyces dermatitidis).